A 301-amino-acid chain; its full sequence is MKINLNNMVTESRNPASANIDTLPTLEMLKLINDEDKKVALAVEQTLPKIAETVDKIAEAFRQGGRLIYIGAGTSGRLGILDASECPPTYGTKPEQVVGLIAGGHQAILHAVENAEDNQQLGANDLQALHFNSKDVLVGIAASGRTPYVLGAMTYAKSVGATVACISCNPESPMTQAADIAIAPIVGPEIVTGSSRMKAGTAQKLILNMLTTGAMIRTGKVYSNLMVDVEATNAKLVERQKNIVIAATECNREQAEQALAECDGHCKTAIVMILAGINAQQAKTLLKKHHGFIRPTISAVR.

The 164-residue stretch at 57-220 folds into the SIS domain; that stretch reads IAEAFRQGGR…TTGAMIRTGK (164 aa). E85 acts as the Proton donor in catalysis. The active site involves E116.

Belongs to the GCKR-like family. MurNAc-6-P etherase subfamily. Homodimer.

The enzyme catalyses N-acetyl-D-muramate 6-phosphate + H2O = N-acetyl-D-glucosamine 6-phosphate + (R)-lactate. It participates in amino-sugar metabolism; 1,6-anhydro-N-acetylmuramate degradation. Its pathway is amino-sugar metabolism; N-acetylmuramate degradation. The protein operates within cell wall biogenesis; peptidoglycan recycling. Functionally, specifically catalyzes the cleavage of the D-lactyl ether substituent of MurNAc 6-phosphate, producing GlcNAc 6-phosphate and D-lactate. Together with AnmK, is also required for the utilization of anhydro-N-acetylmuramic acid (anhMurNAc) either imported from the medium or derived from its own cell wall murein, and thus plays a role in cell wall recycling. This chain is N-acetylmuramic acid 6-phosphate etherase, found in Photorhabdus laumondii subsp. laumondii (strain DSM 15139 / CIP 105565 / TT01) (Photorhabdus luminescens subsp. laumondii).